Consider the following 88-residue polypeptide: Small ribosomal subunit protein bS16c (88 aa).

This sequence belongs to the bacterial ribosomal protein bS16 family.

It localises to the plastid. It is found in the chloroplast. The protein is Small ribosomal subunit protein bS16c of Calycanthus floridus var. glaucus (Eastern sweetshrub).